A 155-amino-acid chain; its full sequence is Eosinophil cationic protein (155 aa).

The signal sequence occupies residues 1–25; sequence MGLKLLESRLCLLLSLGLVLMLASC. The active-site Proton acceptor is histidine 38. 4 disulfide bridges follow: cysteine 47-cysteine 106, cysteine 61-cysteine 118, cysteine 79-cysteine 133, and cysteine 86-cysteine 94. Position 62 to 66 (62 to 66) interacts with substrate; the sequence is KDINT. N-linked (GlcNAc...) asparagine glycans are attached at residues asparagine 88 and asparagine 107. The Proton donor role is filled by histidine 150.

This sequence belongs to the pancreatic ribonuclease family.

It localises to the cytoplasmic granule. Functionally, cytotoxin and helminthotoxin with ribonuclease activity. Possesses a wide variety of biological activities. This chain is Eosinophil cationic protein (Rnase3), found in Rattus norvegicus (Rat).